A 394-amino-acid polypeptide reads, in one-letter code: Phosphopentomutase (394 aa).

The Mn(2+) site is built by aspartate 15, aspartate 288, histidine 293, aspartate 329, histidine 330, and histidine 341.

It belongs to the phosphopentomutase family. The cofactor is Mn(2+).

The protein resides in the cytoplasm. The catalysed reaction is 2-deoxy-alpha-D-ribose 1-phosphate = 2-deoxy-D-ribose 5-phosphate. It carries out the reaction alpha-D-ribose 1-phosphate = D-ribose 5-phosphate. It participates in carbohydrate degradation; 2-deoxy-D-ribose 1-phosphate degradation; D-glyceraldehyde 3-phosphate and acetaldehyde from 2-deoxy-alpha-D-ribose 1-phosphate: step 1/2. In terms of biological role, isomerase that catalyzes the conversion of deoxy-ribose 1-phosphate (dRib-1-P) and ribose 1-phosphate (Rib-1-P) to deoxy-ribose 5-phosphate (dRib-5-P) and ribose 5-phosphate (Rib-5-P), respectively. The sequence is that of Phosphopentomutase (drm) from Bacillus subtilis (strain 168).